Here is a 275-residue protein sequence, read N- to C-terminus: NH(3)-dependent NAD(+) synthetase (275 aa).

46 to 53 (GISGGQDS) provides a ligand contact to ATP. D52 is a Mg(2+) binding site. Position 140 (R140) interacts with deamido-NAD(+). T160 contributes to the ATP binding site. A Mg(2+)-binding site is contributed by E165. Residues K173 and D180 each contribute to the deamido-NAD(+) site. K189 and T211 together coordinate ATP. 260 to 261 (HK) lines the deamido-NAD(+) pocket.

The protein belongs to the NAD synthetase family. As to quaternary structure, homodimer.

The catalysed reaction is deamido-NAD(+) + NH4(+) + ATP = AMP + diphosphate + NAD(+) + H(+). It participates in cofactor biosynthesis; NAD(+) biosynthesis; NAD(+) from deamido-NAD(+) (ammonia route): step 1/1. Functionally, catalyzes the ATP-dependent amidation of deamido-NAD to form NAD. Uses ammonia as a nitrogen source. The sequence is that of NH(3)-dependent NAD(+) synthetase from Escherichia fergusonii (strain ATCC 35469 / DSM 13698 / CCUG 18766 / IAM 14443 / JCM 21226 / LMG 7866 / NBRC 102419 / NCTC 12128 / CDC 0568-73).